We begin with the raw amino-acid sequence, 503 residues long: Maturase K (503 aa).

The protein belongs to the intron maturase 2 family. MatK subfamily.

The protein localises to the plastid. It is found in the chloroplast. Usually encoded in the trnK tRNA gene intron. Probably assists in splicing its own and other chloroplast group II introns. The polypeptide is Maturase K (Diospyros virginiana (American persimmon)).